The chain runs to 442 residues: tRNA modification GTPase MnmE (442 aa).

Residues Arg27, Glu84, and Lys124 each coordinate (6S)-5-formyl-5,6,7,8-tetrahydrofolate. In terms of domain architecture, TrmE-type G spans 221 to 366; that stretch reads GLHVVIVGAP…LLDALQAFAE (146 aa). Residues 231–236, 250–256, and 275–278 each bind GTP; these read NAGKSS, SEEAGTT, and DTAG. The Mg(2+) site is built by Ser235 and Thr256. Residue Lys442 participates in (6S)-5-formyl-5,6,7,8-tetrahydrofolate binding.

Belongs to the TRAFAC class TrmE-Era-EngA-EngB-Septin-like GTPase superfamily. TrmE GTPase family. Homodimer. Heterotetramer of two MnmE and two MnmG subunits. The cofactor is K(+).

The protein resides in the cytoplasm. Its function is as follows. Exhibits a very high intrinsic GTPase hydrolysis rate. Involved in the addition of a carboxymethylaminomethyl (cmnm) group at the wobble position (U34) of certain tRNAs, forming tRNA-cmnm(5)s(2)U34. The chain is tRNA modification GTPase MnmE from Brucella abortus (strain 2308).